A 195-amino-acid polypeptide reads, in one-letter code: ATP-dependent Clp protease proteolytic subunit (195 aa).

Serine 102 functions as the Nucleophile in the catalytic mechanism. The active site involves histidine 125.

Belongs to the peptidase S14 family. Component of the chloroplastic Clp protease core complex.

The protein resides in the plastid. It is found in the chloroplast stroma. It carries out the reaction Hydrolysis of proteins to small peptides in the presence of ATP and magnesium. alpha-casein is the usual test substrate. In the absence of ATP, only oligopeptides shorter than five residues are hydrolyzed (such as succinyl-Leu-Tyr-|-NHMec, and Leu-Tyr-Leu-|-Tyr-Trp, in which cleavage of the -Tyr-|-Leu- and -Tyr-|-Trp bonds also occurs).. Its function is as follows. Cleaves peptides in various proteins in a process that requires ATP hydrolysis. Has a chymotrypsin-like activity. Plays a major role in the degradation of misfolded proteins. The sequence is that of ATP-dependent Clp protease proteolytic subunit from Phaseolus vulgaris (Kidney bean).